Consider the following 171-residue polypeptide: 3-hydroxydecanoyl-[acyl-carrier-protein] dehydratase (171 aa).

His70 is an active-site residue.

Belongs to the thioester dehydratase family. FabA subfamily. As to quaternary structure, homodimer.

The protein localises to the cytoplasm. The enzyme catalyses a (3R)-hydroxyacyl-[ACP] = a (2E)-enoyl-[ACP] + H2O. It catalyses the reaction (3R)-hydroxydecanoyl-[ACP] = (2E)-decenoyl-[ACP] + H2O. It carries out the reaction (2E)-decenoyl-[ACP] = (3Z)-decenoyl-[ACP]. It participates in lipid metabolism; fatty acid biosynthesis. Necessary for the introduction of cis unsaturation into fatty acids. Catalyzes the dehydration of (3R)-3-hydroxydecanoyl-ACP to E-(2)-decenoyl-ACP and then its isomerization to Z-(3)-decenoyl-ACP. Can catalyze the dehydratase reaction for beta-hydroxyacyl-ACPs with saturated chain lengths up to 16:0, being most active on intermediate chain length. The protein is 3-hydroxydecanoyl-[acyl-carrier-protein] dehydratase of Hydrogenovibrio crunogenus (strain DSM 25203 / XCL-2) (Thiomicrospira crunogena).